A 118-amino-acid polypeptide reads, in one-letter code: Basic phospholipase A2 3 (118 aa).

7 cysteine pairs are disulfide-bonded: Cys11/Cys71, Cys27/Cys117, Cys29/Cys45, Cys44/Cys98, Cys51/Cys91, Cys60/Cys84, and Cys78/Cys89. 3 residues coordinate Ca(2+): Tyr28, Gly30, and Gly32. Residue His48 is part of the active site. Asp49 is a Ca(2+) binding site. Asp92 is an active-site residue.

This sequence belongs to the phospholipase A2 family. Group I subfamily. D49 sub-subfamily. As to quaternary structure, monomer. It depends on Ca(2+) as a cofactor. In terms of tissue distribution, expressed by the venom gland.

It is found in the secreted. The enzyme catalyses a 1,2-diacyl-sn-glycero-3-phosphocholine + H2O = a 1-acyl-sn-glycero-3-phosphocholine + a fatty acid + H(+). Functionally, PLA2 catalyzes the calcium-dependent hydrolysis of the 2-acyl groups in 3-sn-phosphoglycerides. The polypeptide is Basic phospholipase A2 3 (Laticauda semifasciata (Black-banded sea krait)).